The chain runs to 226 residues: Lysosomal-associated transmembrane protein 4B (226 aa).

Transmembrane regions (helical) follow at residues 26–46 (ILLG…LLSA), 72–92 (MCIA…ATYG), 100–120 (WIIP…LVAI), and 153–173 (CLVL…GYLI). Positions 205-221 (PPYDDATVNGAAKEPPP) are required for NEDD4 interaction.

It belongs to the LAPTM4/LAPTM5 transporter family. As to quaternary structure, homooligomer; upon reaching the lysosomes. Interacts with MCOLN1. Interacts with NEDD4; may play a role in the lysosomal sorting of LAPTM4B; enhances HGS association with NEDD4; mediates inhibition of EGFR degradation. Interacts with PIP5K1C; promotes SNX5 association with LAPTM4B; kinase activity of PIP5K1C is required; interaction is regulated by phosphatidylinositol 4,5-bisphosphate generated by PIP5K1C. Interacts with HGS; promotes HGS ubiquitination. Interacts with SNX5. Interacts with SLC3A2 and SLC7A5; recruits SLC3A2 and SLC7A5 to lysosomes to promote leucine uptake into these organelles and is required for mTORC1 activation. Interacts with LRRC32; decreases TGFB1 production in regulatory T cells. Interacts with BECN1; competes with EGFR for LAPTM4B binding; regulates EGFR activity. Interacts with EGFR; positively correlates with EGFR activation. Post-translationally, undergoes proteolytic cleavage following delivery to the lysosomes. Ubiquitinated by NEDD4.

It localises to the endomembrane system. Its subcellular location is the late endosome membrane. The protein resides in the cell membrane. It is found in the cell projection. The protein localises to the lysosome membrane. It localises to the endosome membrane. Its subcellular location is the endosome. The protein resides in the multivesicular body membrane. It is found in the multivesicular body lumen. In terms of biological role, required for optimal lysosomal function. Blocks EGF-stimulated EGFR intraluminal sorting and degradation. Conversely by binding with the phosphatidylinositol 4,5-bisphosphate, regulates its PIP5K1C interaction, inhibits HGS ubiquitination and relieves LAPTM4B inhibition of EGFR degradation. Recruits SLC3A2 and SLC7A5 (the Leu transporter) to the lysosome, promoting entry of leucine and other essential amino acid (EAA) into the lysosome, stimulating activation of proton-transporting vacuolar (V)-ATPase protein pump (V-ATPase) and hence mTORC1 activation. Plays a role as negative regulator of TGFB1 production in regulatory T cells. Binds ceramide and facilitates its exit from late endosome in order to control cell death pathways. This chain is Lysosomal-associated transmembrane protein 4B, found in Macaca fascicularis (Crab-eating macaque).